Reading from the N-terminus, the 397-residue chain is Subtilisin-like serine protease Pen ch 13.0101 (397 aa).

The signal sequence occupies residues 1–19 (MGFLKVLATSLATLAVVDA). A propeptide spans 20–115 (GTLLTASNTD…IEPDMIVNAT (96 aa)) (removed in mature form). The Inhibitor I9 domain occupies 35–113 (SYIVVMNDDV…KYIEPDMIVN (79 aa)). An N-linked (GlcNAc...) asparagine glycan is attached at asparagine 113. The 273-residue stretch at 125–397 (SWGLARISSK…SKLLYNGINV (273 aa)) folds into the Peptidase S8 domain. Catalysis depends on charge relay system residues aspartate 157 and histidine 188. N-linked (GlcNAc...) asparagine glycosylation is found at asparagine 249 and asparagine 284. Serine 343 (charge relay system) is an active-site residue.

Belongs to the peptidase S8 family.

The protein resides in the secreted. Functionally, serine protease. The polypeptide is Subtilisin-like serine protease Pen ch 13.0101 (Penicillium rubens).